A 309-amino-acid polypeptide reads, in one-letter code: HPr kinase/phosphorylase (309 aa).

Active-site residues include H138 and K159. 153 to 160 (GASGIGKS) contributes to the ATP binding site. S160 lines the Mg(2+) pocket. The active-site Proton acceptor; for phosphorylation activity. Proton donor; for dephosphorylation activity is D177. Residues 201-210 (IEIRGVGIID) are important for the catalytic mechanism of both phosphorylation and dephosphorylation. E202 contributes to the Mg(2+) binding site. The active site involves R243. Residues 264-269 (PVKTGR) form an important for the catalytic mechanism of dephosphorylation region.

The protein belongs to the HPrK/P family. In terms of assembly, homohexamer. Mg(2+) serves as cofactor.

The catalysed reaction is [HPr protein]-L-serine + ATP = [HPr protein]-O-phospho-L-serine + ADP + H(+). It carries out the reaction [HPr protein]-O-phospho-L-serine + phosphate + H(+) = [HPr protein]-L-serine + diphosphate. Functionally, catalyzes the ATP- as well as the pyrophosphate-dependent phosphorylation of a specific serine residue in HPr, a phosphocarrier protein of the phosphoenolpyruvate-dependent sugar phosphotransferase system (PTS). HprK/P also catalyzes the pyrophosphate-producing, inorganic phosphate-dependent dephosphorylation (phosphorolysis) of seryl-phosphorylated HPr (P-Ser-HPr). The two antagonistic activities of HprK/P are regulated by several intracellular metabolites, which change their concentration in response to the absence or presence of rapidly metabolisable carbon sources (glucose, fructose, etc.) in the growth medium. Therefore, by controlling the phosphorylation state of HPr, HPrK/P is a sensor enzyme that plays a major role in the regulation of carbon metabolism and sugar transport: it mediates carbon catabolite repression (CCR), and regulates PTS-catalyzed carbohydrate uptake and inducer exclusion. This is HPr kinase/phosphorylase from Lactococcus lactis subsp. lactis (strain IL1403) (Streptococcus lactis).